Reading from the N-terminus, the 1409-residue chain is Mediator of RNA polymerase II transcription subunit 23 (1409 aa).

Residues 1359–1409 (ASAAGQGPAQGGPQSQQPQTTGQAGGQPSVPQQQQQTQQQQPQQQQQVQQQ) form a disordered region.

The protein belongs to the Mediator complex subunit 23 family. In terms of assembly, component of the Mediator complex.

The protein localises to the nucleus. Component of the Mediator complex, a coactivator involved in the regulated transcription of nearly all RNA polymerase II-dependent genes. Mediator functions as a bridge to convey information from gene-specific regulatory proteins to the basal RNA polymerase II transcription machinery. Mediator is recruited to promoters by direct interactions with regulatory proteins and serves as a scaffold for the assembly of a functional preinitiation complex with RNA polymerase II and the general transcription factors. The chain is Mediator of RNA polymerase II transcription subunit 23 (MED23) from Aedes aegypti (Yellowfever mosquito).